The sequence spans 569 residues: Sulfite reductase [NADPH] hemoprotein beta-component (569 aa).

Residues Cys-434, Cys-440, Cys-479, and Cys-483 each coordinate [4Fe-4S] cluster. Residue Cys-483 participates in siroheme binding.

This sequence belongs to the nitrite and sulfite reductase 4Fe-4S domain family. In terms of assembly, alpha(8)-beta(8). The alpha component is a flavoprotein, the beta component is a hemoprotein. It depends on siroheme as a cofactor. [4Fe-4S] cluster serves as cofactor.

The enzyme catalyses hydrogen sulfide + 3 NADP(+) + 3 H2O = sulfite + 3 NADPH + 4 H(+). It participates in sulfur metabolism; hydrogen sulfide biosynthesis; hydrogen sulfide from sulfite (NADPH route): step 1/1. Component of the sulfite reductase complex that catalyzes the 6-electron reduction of sulfite to sulfide. This is one of several activities required for the biosynthesis of L-cysteine from sulfate. In Staphylococcus carnosus (strain TM300), this protein is Sulfite reductase [NADPH] hemoprotein beta-component.